A 319-amino-acid polypeptide reads, in one-letter code: tRNA(Ile)-lysidine synthase (319 aa).

32 to 37 (SGGSDS) contacts ATP.

This sequence belongs to the tRNA(Ile)-lysidine synthase family.

It is found in the cytoplasm. The enzyme catalyses cytidine(34) in tRNA(Ile2) + L-lysine + ATP = lysidine(34) in tRNA(Ile2) + AMP + diphosphate + H(+). Its function is as follows. Ligates lysine onto the cytidine present at position 34 of the AUA codon-specific tRNA(Ile) that contains the anticodon CAU, in an ATP-dependent manner. Cytidine is converted to lysidine, thus changing the amino acid specificity of the tRNA from methionine to isoleucine. This is tRNA(Ile)-lysidine synthase from Chlamydia pneumoniae (Chlamydophila pneumoniae).